A 271-amino-acid polypeptide reads, in one-letter code: Putative glucose-6-phosphate 1-epimerase (271 aa).

Substrate-binding residues include R71 and R93. H151 is an active-site residue. Residue D193 participates in substrate binding. Residue E249 is part of the active site.

The protein belongs to the glucose-6-phosphate 1-epimerase family.

It catalyses the reaction alpha-D-glucose 6-phosphate = beta-D-glucose 6-phosphate. This is Putative glucose-6-phosphate 1-epimerase from Haemophilus influenzae (strain ATCC 51907 / DSM 11121 / KW20 / Rd).